A 364-amino-acid polypeptide reads, in one-letter code: Putative [LysW]-aminoadipate semialdehyde/glutamate semialdehyde transaminase (364 aa).

Pyridoxal 5'-phosphate-binding positions include 90-91 and F117; that span reads GT. R120 serves as a coordination point for substrate. 202–205 contacts pyridoxal 5'-phosphate; that stretch reads DEVQ. K230 carries the N6-(pyridoxal phosphate)lysine modification. Residue S254 coordinates substrate. Position 255 (T255) interacts with pyridoxal 5'-phosphate.

Belongs to the class-III pyridoxal-phosphate-dependent aminotransferase family. LysJ subfamily. Homodimer. Pyridoxal 5'-phosphate serves as cofactor.

It is found in the cytoplasm. It carries out the reaction [amino-group carrier protein]-C-terminal-gamma-(L-lysyl)-L-glutamate + 2-oxoglutarate = [amino-group carrier protein]-C-terminal-N-(1-carboxy-5-oxopentan-1-yl)-L-glutamine + L-glutamate. The catalysed reaction is [amino-group carrier protein]-C-terminal-gamma-(L-ornithyl)-L-glutamate + 2-oxoglutarate = [amino-group carrier protein]-C-terminal-gamma-(L-glutamyl-5-semialdehyde)-L-glutamate + L-glutamate. Its pathway is amino-acid biosynthesis; L-lysine biosynthesis via AAA pathway; L-lysine from L-alpha-aminoadipate (Thermus route): step 4/5. It functions in the pathway amino-acid biosynthesis; L-arginine biosynthesis. Involved in both the arginine and lysine biosynthetic pathways. This Pyrococcus abyssi (strain GE5 / Orsay) protein is Putative [LysW]-aminoadipate semialdehyde/glutamate semialdehyde transaminase.